The primary structure comprises 209 residues: Adenylate kinase (209 aa).

Residue 10 to 15 (GAGKGT) participates in ATP binding. Positions 30–59 (STGDLFRAAIKEQTDLGKKVKAVIDSGALV) are NMP. Residues threonine 31, arginine 36, 57–59 (ALV), 85–88 (GFPR), and glutamine 92 each bind AMP. The LID stretch occupies residues 121 to 158 (GRRVCSSCGQSFHIEFVKPKKEGICDSCSGDLMIRPDD). Arginine 122 provides a ligand contact to ATP. The Zn(2+) site is built by cysteine 125 and cysteine 128. Residue 131 to 132 (SF) coordinates ATP. Zn(2+)-binding residues include cysteine 145 and cysteine 148. Residues arginine 155 and arginine 166 each contribute to the AMP site. Proline 194 contacts ATP.

Belongs to the adenylate kinase family. Monomer.

The protein localises to the cytoplasm. The catalysed reaction is AMP + ATP = 2 ADP. Its pathway is purine metabolism; AMP biosynthesis via salvage pathway; AMP from ADP: step 1/1. Catalyzes the reversible transfer of the terminal phosphate group between ATP and AMP. Plays an important role in cellular energy homeostasis and in adenine nucleotide metabolism. The sequence is that of Adenylate kinase from Treponema denticola (strain ATCC 35405 / DSM 14222 / CIP 103919 / JCM 8153 / KCTC 15104).